The sequence spans 473 residues: Mannose-1-phosphate guanylyltransferase (473 aa).

It belongs to the mannose-6-phosphate isomerase type 2 family. In terms of assembly, homodimer.

It carries out the reaction alpha-D-mannose 1-phosphate + GTP + H(+) = GDP-alpha-D-mannose + diphosphate. It functions in the pathway nucleotide-sugar biosynthesis; GDP-alpha-D-mannose biosynthesis; GDP-alpha-D-mannose from alpha-D-mannose 1-phosphate (GTP route): step 1/1. Its pathway is bacterial outer membrane biogenesis; LPS O-antigen biosynthesis. In terms of biological role, involved in GDP-mannose biosynthesis which serves as the activated sugar nucleotide precursor for mannose residues in cell surface polysaccharides. This enzyme participates in synthesis of the LPS group C2 O antigen. The polypeptide is Mannose-1-phosphate guanylyltransferase (rfbM) (Salmonella muenchen).